The primary structure comprises 483 residues: Betaine aldehyde dehydrogenase (483 aa).

K(+) is bound by residues I27 and D93. An NAD(+)-binding site is contributed by 149–151 (GAW). The active-site Charge relay system is K161. 175 to 178 (KPSE) is a binding site for NAD(+). V179 contributes to the K(+) binding site. 228–231 (SVPT) contributes to the NAD(+) binding site. V243 is a K(+) binding site. E249 acts as the Proton acceptor in catalysis. G251, C283, and E380 together coordinate NAD(+). C283 acts as the Nucleophile in catalysis. Position 283 is a cysteine sulfenic acid (-SOH) (C283). K(+)-binding residues include K450 and G453. The Charge relay system role is filled by E457.

The protein belongs to the aldehyde dehydrogenase family. Dimer of dimers. K(+) is required as a cofactor.

The catalysed reaction is betaine aldehyde + NAD(+) + H2O = glycine betaine + NADH + 2 H(+). It participates in amine and polyamine biosynthesis; betaine biosynthesis via choline pathway; betaine from betaine aldehyde: step 1/1. Functionally, involved in the biosynthesis of the osmoprotectant glycine betaine. Catalyzes the irreversible oxidation of betaine aldehyde to the corresponding acid. The protein is Betaine aldehyde dehydrogenase of Cereibacter sphaeroides (strain ATCC 17023 / DSM 158 / JCM 6121 / CCUG 31486 / LMG 2827 / NBRC 12203 / NCIMB 8253 / ATH 2.4.1.) (Rhodobacter sphaeroides).